Reading from the N-terminus, the 402-residue chain is Multidrug resistance protein MdtH (402 aa).

11 helical membrane passes run 13–33, 45–65, 99–116, 139–159, 165–185, 214–234, 244–264, 277–297, 300–322, 340–360, and 368–388; these read YFLLIDNMLVVLGFFVVFPLI, ALMVGIALGLRQFIQQGLGIF, PWLLWFSCFLSGLGGTLF, LLMMQDSAGAVTGALLGSWLL, LVCATGAVLFVLCAAFNAWLL, VLTLAGYYMLAVQVMLMLPIM, AVKWMYAIEACLSLTLLYPIA, LMAGLLLMSLSMLPVGLVGNL, LFTLICTFYIGSVIAEPARETLS, LGLAIGGAIGYIGGGWLFDMG, and LPWMMLGVIGIMTFLALGWQF.

The protein belongs to the major facilitator superfamily. DHA1 family. MdtH (TC 2.A.1.2.21) subfamily.

Its subcellular location is the cell inner membrane. This is Multidrug resistance protein MdtH from Citrobacter koseri (strain ATCC BAA-895 / CDC 4225-83 / SGSC4696).